The chain runs to 173 residues: NADH-quinone oxidoreductase subunit B (173 aa).

4 residues coordinate [4Fe-4S] cluster: Cys46, Cys47, Cys112, and Cys142.

This sequence belongs to the complex I 20 kDa subunit family. As to quaternary structure, NDH-1 is composed of 14 different subunits. Subunits NuoB, C, D, E, F, and G constitute the peripheral sector of the complex. Requires [4Fe-4S] cluster as cofactor.

It is found in the cell membrane. The enzyme catalyses a quinone + NADH + 5 H(+)(in) = a quinol + NAD(+) + 4 H(+)(out). Its function is as follows. NDH-1 shuttles electrons from NADH, via FMN and iron-sulfur (Fe-S) centers, to quinones in the respiratory chain. The immediate electron acceptor for the enzyme in this species is believed to be a menaquinone. Couples the redox reaction to proton translocation (for every two electrons transferred, four hydrogen ions are translocated across the cytoplasmic membrane), and thus conserves the redox energy in a proton gradient. This chain is NADH-quinone oxidoreductase subunit B, found in Desulfitobacterium hafniense (strain DSM 10664 / DCB-2).